Here is a 113-residue protein sequence, read N- to C-terminus: U10-theraphotoxin-Hs2a (113 aa).

The N-terminal stretch at methionine 1–alanine 21 is a signal peptide. Positions aspartate 22–arginine 67 are excised as a propeptide. Intrachain disulfides connect cysteine 68/cysteine 86, cysteine 75/cysteine 91, and cysteine 85/cysteine 106.

This sequence belongs to the neurotoxin 14 (magi-1) family. 02 (HWTX-XVIc) subfamily. In terms of tissue distribution, expressed by the venom gland.

Its subcellular location is the secreted. Its function is as follows. Probable ion channel inhibitor. The protein is U10-theraphotoxin-Hs2a of Cyriopagopus schmidti (Chinese bird spider).